Reading from the N-terminus, the 1427-residue chain is Protein expanded (1427 aa).

Residues 26-399 enclose the FERM domain; that stretch reads RFLALRLLGQ…DTHQWSMKLA (374 aa). The disordered stretch occupies residues 176–212; it reads GDAPPGTSNSKDDSGEETSASPSNGGRGLSATTTLPK. Polar residues predominate over residues 192–211; the sequence is ETSASPSNGGRGLSATTTLP. Phosphotyrosine occurs at positions 227 and 423. 2 disordered regions span residues 520–566 and 611–656; these read VRPQ…IGSQ and NSAL…SGVY. The segment covering 524-544 has biased composition (polar residues); sequence DASSNGATIVTNSSVQRNSMG. Low complexity predominate over residues 545 to 559; the sequence is TTANDSSTATDSPSS. Position 679 is a phosphotyrosine (tyrosine 679). The span at 688–710 shows a compositional bias: basic and acidic residues; it reads EETHVQHSDSVDGKKKEDFRPRS. Disordered stretches follow at residues 688–732, 766–792, 815–880, 939–963, and 1000–1022; these read EETH…DNKH, YVTL…YSAR, APKP…SLKS, HNSN…HRHS, and LAPP…HPHL. Tyrosine 766 bears the Phosphotyrosine mark. The segment covering 818–838 has biased composition (pro residues); it reads PDSPPCSPPVPPAPIPAPPPA. The RXPPXY motif signature appears at 842 to 847; that stretch reads RDPPPY. Residues 848–859 show a composition bias toward polar residues; that stretch reads SISSKPRPTSLI. Over residues 860–877 the composition is skewed to low complexity; that stretch reads SVSSSAHPAPSAAGSMSS. Residues 951 to 963 are compositionally biased toward basic residues; that stretch reads LHHHHVPSHHRHS. Over residues 1001 to 1019 the composition is skewed to pro residues; sequence APPPPSLPRQPPPPPPPNH. The short motif at 1008–1020 is the SH3-binding element; sequence PRQPPPPPPPNHP. Tyrosine 1103 bears the Phosphotyrosine mark. Positions 1149-1157 match the SH3-binding motif; that stretch reads PPPPPPLHP. Serine 1181 is modified (phosphoserine). Disordered stretches follow at residues 1190 to 1267 and 1345 to 1398; these read DLLP…WAGE and TGQE…LPVQ. Pro residues-rich tracts occupy residues 1214-1230 and 1237-1246; these read PPMP…PSKP and PIPPRKPPTL. Polar residues-rich tracts occupy residues 1253–1262 and 1345–1370; these read SPLTKTSSGA and TGQE…SSAG. A compositionally biased stretch (basic residues) spans 1376 to 1388; that stretch reads KARKGSTVSHRHP.

In terms of assembly, forms a complex with Kibra and Mer. Interacts (via RXPPXY motif) with Kibra (via domain WW 1). Interacts with Mer and Hpo (via SARAH domain). Interacts with Schip1; the interaction results in recruitment of Schip1 to the apical cell membrane. Interacts with ack and yki. Phosphorylated by Ack at several tyrosines including Tyr-227, Tyr-423, Tyr-679, Tyr-766 and Tyr-1103.

Its subcellular location is the apical cell membrane. Activates the Hippo/SWH (Sav/Wts/Hpo) signaling pathway, a signaling pathway that plays a pivotal role in organ size control and tumor suppression by restricting proliferation and promoting apoptosis. The core of this pathway is composed of a kinase cascade wherein Hippo (Hpo), in complex with its regulatory protein Salvador (Sav), phosphorylates and activates Warts (Wts) in complex with its regulatory protein Mats, which in turn phosphorylates and inactivates the Yorkie (Yki) oncoprotein. Ex acts synergistically along with Mer and Kibra to regulate the Hippo signaling pathway. Involved in the control of cell proliferation in imaginal disks. May bind to certain proteins of signal transduction pathways by interaction with their SH3 domains. Required for apical localization of Schip1. The protein is Protein expanded (ex) of Drosophila melanogaster (Fruit fly).